Here is a 207-residue protein sequence, read N- to C-terminus: 3-demethoxyubiquinol 3-hydroxylase (207 aa).

6 residues coordinate Fe cation: Glu56, Glu86, His89, Glu138, Glu170, and His173.

The protein belongs to the COQ7 family. The cofactor is Fe cation.

It is found in the cell membrane. The enzyme catalyses a 5-methoxy-2-methyl-3-(all-trans-polyprenyl)benzene-1,4-diol + AH2 + O2 = a 3-demethylubiquinol + A + H2O. It functions in the pathway cofactor biosynthesis; ubiquinone biosynthesis. Functionally, catalyzes the hydroxylation of 2-nonaprenyl-3-methyl-6-methoxy-1,4-benzoquinol during ubiquinone biosynthesis. This chain is 3-demethoxyubiquinol 3-hydroxylase, found in Dechloromonas aromatica (strain RCB).